The following is a 458-amino-acid chain: Siroheme synthase (458 aa).

The segment at 1 to 203 (MDYLPLFFDL…GNLAAAEQLI (203 aa)) is precorrin-2 dehydrogenase /sirohydrochlorin ferrochelatase. NAD(+) is bound by residues 22-23 (TI) and 43-44 (PK). Serine 128 is subject to Phosphoserine. A uroporphyrinogen-III C-methyltransferase region spans residues 216-458 (GEVYLVGAGP…RCHEKLNWYK (243 aa)). Proline 225 serves as a coordination point for S-adenosyl-L-methionine. Aspartate 248 functions as the Proton acceptor in the catalytic mechanism. Residue lysine 270 is the Proton donor of the active site. S-adenosyl-L-methionine contacts are provided by residues 301-303 (GGD), isoleucine 306, 331-332 (TA), methionine 383, and glycine 412.

It in the N-terminal section; belongs to the precorrin-2 dehydrogenase / sirohydrochlorin ferrochelatase family. In the C-terminal section; belongs to the precorrin methyltransferase family.

It carries out the reaction uroporphyrinogen III + 2 S-adenosyl-L-methionine = precorrin-2 + 2 S-adenosyl-L-homocysteine + H(+). The catalysed reaction is precorrin-2 + NAD(+) = sirohydrochlorin + NADH + 2 H(+). It catalyses the reaction siroheme + 2 H(+) = sirohydrochlorin + Fe(2+). The protein operates within cofactor biosynthesis; adenosylcobalamin biosynthesis; precorrin-2 from uroporphyrinogen III: step 1/1. Its pathway is cofactor biosynthesis; adenosylcobalamin biosynthesis; sirohydrochlorin from precorrin-2: step 1/1. It functions in the pathway porphyrin-containing compound metabolism; siroheme biosynthesis; precorrin-2 from uroporphyrinogen III: step 1/1. It participates in porphyrin-containing compound metabolism; siroheme biosynthesis; siroheme from sirohydrochlorin: step 1/1. The protein operates within porphyrin-containing compound metabolism; siroheme biosynthesis; sirohydrochlorin from precorrin-2: step 1/1. Multifunctional enzyme that catalyzes the SAM-dependent methylations of uroporphyrinogen III at position C-2 and C-7 to form precorrin-2 via precorrin-1. Then it catalyzes the NAD-dependent ring dehydrogenation of precorrin-2 to yield sirohydrochlorin. Finally, it catalyzes the ferrochelation of sirohydrochlorin to yield siroheme. This Saccharophagus degradans (strain 2-40 / ATCC 43961 / DSM 17024) protein is Siroheme synthase.